Here is a 600-residue protein sequence, read N- to C-terminus: Aspartate--tRNA(Asp/Asn) ligase (600 aa).

L-aspartate is bound at residue E175. Residues Q199–K202 form an aspartate region. R221 contacts L-aspartate. Residues R221–E223 and Q230 contribute to the ATP site. Position 453 (H453) interacts with L-aspartate. Position 487 (E487) interacts with ATP. An L-aspartate-binding site is contributed by R494. An ATP-binding site is contributed by G539–R542. The interval A578 to K600 is disordered. Over residues Q580–P590 the composition is skewed to basic and acidic residues.

Belongs to the class-II aminoacyl-tRNA synthetase family. Type 1 subfamily. Homodimer.

It localises to the cytoplasm. It carries out the reaction tRNA(Asx) + L-aspartate + ATP = L-aspartyl-tRNA(Asx) + AMP + diphosphate. Its function is as follows. Aspartyl-tRNA synthetase with relaxed tRNA specificity since it is able to aspartylate not only its cognate tRNA(Asp) but also tRNA(Asn). Reaction proceeds in two steps: L-aspartate is first activated by ATP to form Asp-AMP and then transferred to the acceptor end of tRNA(Asp/Asn). In Corynebacterium jeikeium (strain K411), this protein is Aspartate--tRNA(Asp/Asn) ligase.